The primary structure comprises 229 residues: Multiple organellar RNA editing factor 5, chloroplastic/mitochondrial (229 aa).

The N-terminal 57 residues, 1–57, are a transit peptide targeting the chloroplast and mitochondrion; sequence MAKTLARSTASRITKRLISTSGATTPSPSYILSRRSTPVFSHAVGFISSLNRFTTIR.

The protein belongs to the MORF family. In terms of assembly, homodimer and heterodimers with MORF8/RIP1, MORF3/RIP3, MORF6/RIP6, MORF7/RIP7 and MORF9/RIP9.

The protein resides in the mitochondrion. It is found in the plastid. It localises to the chloroplast. Functionally, involved in organellar RNA editing. Required for the processing of few RNA editing sites in mitochondria. This is Multiple organellar RNA editing factor 5, chloroplastic/mitochondrial from Arabidopsis thaliana (Mouse-ear cress).